The sequence spans 207 residues: Imidazole glycerol phosphate synthase subunit HisH (207 aa).

The region spanning 1–207 (MIGIIDYGMG…KRFGQLVEGN (207 aa)) is the Glutamine amidotransferase type-1 domain. Cys79 serves as the catalytic Nucleophile. Catalysis depends on residues His185 and Glu187.

As to quaternary structure, heterodimer of HisH and HisF.

It localises to the cytoplasm. The enzyme catalyses 5-[(5-phospho-1-deoxy-D-ribulos-1-ylimino)methylamino]-1-(5-phospho-beta-D-ribosyl)imidazole-4-carboxamide + L-glutamine = D-erythro-1-(imidazol-4-yl)glycerol 3-phosphate + 5-amino-1-(5-phospho-beta-D-ribosyl)imidazole-4-carboxamide + L-glutamate + H(+). It catalyses the reaction L-glutamine + H2O = L-glutamate + NH4(+). Its pathway is amino-acid biosynthesis; L-histidine biosynthesis; L-histidine from 5-phospho-alpha-D-ribose 1-diphosphate: step 5/9. In terms of biological role, IGPS catalyzes the conversion of PRFAR and glutamine to IGP, AICAR and glutamate. The HisH subunit catalyzes the hydrolysis of glutamine to glutamate and ammonia as part of the synthesis of IGP and AICAR. The resulting ammonia molecule is channeled to the active site of HisF. The chain is Imidazole glycerol phosphate synthase subunit HisH from Shouchella clausii (strain KSM-K16) (Alkalihalobacillus clausii).